Consider the following 205-residue polypeptide: MANTLFDRTIAFAGICQAASLVQKMAKDGHCDQEAFDTAIQSILETNPSNTVAVYGKESNLRIGLECLVRDFDNTPSGSELTRYLISLMALERKLAGHRDGMSKLGERIGTIERQLEHFDIHDEQMLSNIASIYLDVISPMGPRIQVTGTPSVLQQPMTQHKVRALLLSGIRSAVLWRQVGGKRRHLIFGRKKMVEQAKIILARI.

This sequence belongs to the HflD family.

The protein resides in the cytoplasm. It localises to the cell inner membrane. This is High frequency lysogenization protein HflD homolog from Aliivibrio fischeri (strain MJ11) (Vibrio fischeri).